Consider the following 158-residue polypeptide: Putative tyrosine-protein phosphatase OCA1 (158 aa).

The Tyrosine-protein phosphatase domain occupies 7–158 (NYGMVEENFY…DEELVFGASY (152 aa)). The active-site Phosphocysteine intermediate is C99.

It belongs to the protein-tyrosine phosphatase family.

Its subcellular location is the cytoplasm. The enzyme catalyses O-phospho-L-tyrosyl-[protein] + H2O = L-tyrosyl-[protein] + phosphate. Functionally, putative tyrosine-protein phosphatase required for protection against superoxide stress. This Mycosarcoma maydis (Corn smut fungus) protein is Putative tyrosine-protein phosphatase OCA1 (OCA1).